The primary structure comprises 91 residues: Protein SPATA45 homolog (91 aa).

A disordered region spans residues arginine 42–tyrosine 91. Polar residues predominate over residues glycine 51–aspartate 70. The span at proline 76–tyrosine 91 shows a compositional bias: basic and acidic residues.

It belongs to the SPATA45 family.

The protein is Protein SPATA45 homolog of Nematostella vectensis (Starlet sea anemone).